Consider the following 66-residue polypeptide: COP9 signalosome complex subunit 6a (66 aa).

This sequence belongs to the peptidase M67A family. CSN6 subfamily. In terms of assembly, component of the CSN complex, probably composed of CSN1, CSN2, CSN3, CSN4, CSN5 (CSN5A or CSN5B), CSN6 (CSN6A or CSN6B), CSN7 and CSN8.

It is found in the cytoplasm. Its subcellular location is the nucleus. Its function is as follows. Component of the COP9 signalosome complex (CSN), a complex involved in various cellular and developmental processes such as photomorphogenesis and auxin and jasmonate responses. The CSN complex is an essential regulator of the ubiquitin (Ubl) conjugation pathway by mediating the deneddylation of the cullin subunits of SCF-type E3 ligase complexes, leading to decrease the Ubl ligase activity of SCF. It is involved in repression of photomorphogenesis in darkness by regulating the activity of COP1-containing Ubl ligase complexes. This Brassica oleracea (Wild cabbage) protein is COP9 signalosome complex subunit 6a (CSN6A).